The following is an 85-amino-acid chain: Large ribosomal subunit protein bL27 (85 aa).

The segment at 1–21 is disordered; sequence MAHKKGVGSSRNGRDSDGQRL.

This sequence belongs to the bacterial ribosomal protein bL27 family.

This Geobacter sp. (strain M21) protein is Large ribosomal subunit protein bL27.